The primary structure comprises 860 residues: Tetratricopeptide repeat protein 13 (860 aa).

7 TPR repeats span residues 143–176 (TNEE…EPDL), 216–248 (PEVF…LQPS), 249–282 (ARLY…NKNQ), 284–316 (IAML…KVDF), 317–350 (IDAY…NQNH), 352–384 (QTLQ…EPYN), and 386–418 (VCQY…DPLP).

The protein is Tetratricopeptide repeat protein 13 (TTC13) of Homo sapiens (Human).